A 352-amino-acid polypeptide reads, in one-letter code: Chorismate synthase (352 aa).

R48 serves as a coordination point for NADP(+). Residues 125–127 (RSS), 238–239 (NA), G278, 293–297 (KPTSS), and R319 contribute to the FMN site.

The protein belongs to the chorismate synthase family. Homotetramer. The cofactor is FMNH2.

The enzyme catalyses 5-O-(1-carboxyvinyl)-3-phosphoshikimate = chorismate + phosphate. The protein operates within metabolic intermediate biosynthesis; chorismate biosynthesis; chorismate from D-erythrose 4-phosphate and phosphoenolpyruvate: step 7/7. Catalyzes the anti-1,4-elimination of the C-3 phosphate and the C-6 proR hydrogen from 5-enolpyruvylshikimate-3-phosphate (EPSP) to yield chorismate, which is the branch point compound that serves as the starting substrate for the three terminal pathways of aromatic amino acid biosynthesis. This reaction introduces a second double bond into the aromatic ring system. The protein is Chorismate synthase of Legionella pneumophila (strain Paris).